The sequence spans 219 residues: 2,5-diamino-6-ribosylamino-4(3H)-pyrimidinone 5'-phosphate reductase (219 aa).

Residues Thr52, Asp56, 87-90 (SRCR), Val134, and 156-159 (GGTL) contribute to the NADP(+) site.

The protein belongs to the HTP reductase family. Homodimer.

The enzyme catalyses 2,5-diamino-6-(1-D-ribitylamino)pyrimidin-4(3H)-one 5'-phosphate + NADP(+) = 2,5-diamino-6-(1-D-ribosylamino)pyrimidin-4(3H)-one 5'-phosphate + NADPH + H(+). It carries out the reaction 2,5-diamino-6-(1-D-ribitylamino)pyrimidin-4(3H)-one 5'-phosphate + NAD(+) = 2,5-diamino-6-(1-D-ribosylamino)pyrimidin-4(3H)-one 5'-phosphate + NADH + H(+). It functions in the pathway cofactor biosynthesis; riboflavin biosynthesis. Its function is as follows. Catalyzes an early step in riboflavin biosynthesis, the NADPH-dependent reduction of the ribose side chain of 2,5-diamino-6-ribosylamino-4(3H)-pyrimidinone 5'-phosphate, yielding 2,5-diamino-6-ribitylamino-4(3H)-pyrimidinone 5'-phosphate. The chain is 2,5-diamino-6-ribosylamino-4(3H)-pyrimidinone 5'-phosphate reductase from Archaeoglobus fulgidus (strain ATCC 49558 / DSM 4304 / JCM 9628 / NBRC 100126 / VC-16).